A 615-amino-acid polypeptide reads, in one-letter code: Alpha-terpinene synthase TPS33PK, chloroplastic (615 aa).

Residues 1 to 33 constitute a chloroplast transit peptide; it reads MFCRLGVHQFSPLSLILNTTKLARASTLSSACY. (2E)-geranyl diphosphate-binding residues include E334, V371, L375, L513, and S516. V371 and L375 together coordinate Mg(2+). The short motif at 371–375 is the DDXXD motif element; it reads VYGTL. Residues S516, M520, and D524 each coordinate Mg(2+).

It belongs to the terpene synthase family. Tpsb subfamily. Requires Mg(2+) as cofactor. Mn(2+) is required as a cofactor.

The protein resides in the plastid. It is found in the chloroplast. It carries out the reaction (2E)-geranyl diphosphate = alpha-terpinene + diphosphate. The catalysed reaction is (2E)-geranyl diphosphate = gamma-terpinene + diphosphate. Its pathway is secondary metabolite biosynthesis; terpenoid biosynthesis. In terms of biological role, involved in monoterpene (C10) olefins biosynthesis, constituants of cannabinoids and terpenoids-rich resins. Catalyzes mainly the conversion of (2E)-geranyl diphosphate to alpha-terpinene and gamma-terpinene. The polypeptide is Alpha-terpinene synthase TPS33PK, chloroplastic (Cannabis sativa (Hemp)).